Reading from the N-terminus, the 148-residue chain is Ribonuclease P protein component (148 aa).

A disordered region spans residues 119–148 (PLPAAPGTMPPARAPRPSSLSPTEPDPRSD).

Belongs to the RnpA family. As to quaternary structure, consists of a catalytic RNA component (M1 or rnpB) and a protein subunit.

It catalyses the reaction Endonucleolytic cleavage of RNA, removing 5'-extranucleotides from tRNA precursor.. RNaseP catalyzes the removal of the 5'-leader sequence from pre-tRNA to produce the mature 5'-terminus. It can also cleave other RNA substrates such as 4.5S RNA. The protein component plays an auxiliary but essential role in vivo by binding to the 5'-leader sequence and broadening the substrate specificity of the ribozyme. This chain is Ribonuclease P protein component, found in Xanthomonas campestris pv. campestris (strain 8004).